The chain runs to 409 residues: Outer membrane protein YopM (409 aa).

LRR repeat units lie at residues 72-91 (QAHELELNNLGLSSLPELPP), 92-113 (HLESLVASCNSLTELPELPQSL), 114-131 (KSLLVDNNNLKALSDLPP), 132-153 (LLEYLGVSNNQLEKLPELQNSS), 154-173 (FLKIIDVDNNSLKKLPDLPP), 174-195 (SLEFIAAGNNQLEELPELQNLP), 196-215 (FLTAIYADNNSLKKLPDLPL), 216-237 (SLESIVAGNNILEELPELQNLP), 238-257 (FLTTIYADNNLLKTLPDLPP), 258-279 (SLEALNVRDNYLTDLPELPQSL), 280-297 (TFLDVSENIFSGLSELPP), 298-317 (NLYYLNASSNEIRSLCDLPP), 318-339 (SLEELNVSNNKLIELPALPPRL), 340-357 (ERLIASFNHLAEVPELPQ), and 358-379 (NLKQLHVEYNPLREFPDIPESV). The Ca(2+) site is built by asparagine 246 and aspartate 266. Ca(2+) is bound by residues asparagine 307, glutamate 308, and asparagine 326.

Belongs to the LRR-containing bacterial E3 ligase family. As to quaternary structure, homotetramer forming a hollow cylinder with an inner diameter of approximately 35 angstroms.

It localises to the cell outer membrane. Its subcellular location is the secreted. Effector proteins function to alter host cell physiology and promote bacterial survival in host tissues. The protein is Outer membrane protein YopM (yopM) of Yersinia pestis.